Consider the following 77-residue polypeptide: Acyl carrier protein (77 aa).

The Carrier domain occupies 1–76; it reads MSVEQRVKEI…DVLDYIKSKQ (76 aa). Ser-36 carries the post-translational modification O-(pantetheine 4'-phosphoryl)serine.

It belongs to the acyl carrier protein (ACP) family. 4'-phosphopantetheine is transferred from CoA to a specific serine of apo-ACP by AcpS. This modification is essential for activity because fatty acids are bound in thioester linkage to the sulfhydryl of the prosthetic group.

The protein resides in the cytoplasm. Its pathway is lipid metabolism; fatty acid biosynthesis. Carrier of the growing fatty acid chain in fatty acid biosynthesis. The protein is Acyl carrier protein of Sulfurihydrogenibium sp. (strain YO3AOP1).